A 345-amino-acid chain; its full sequence is Protein RecA (345 aa).

ATP is bound at residue 65-72 (GPESSGKT).

It belongs to the RecA family.

The protein resides in the cytoplasm. Functionally, can catalyze the hydrolysis of ATP in the presence of single-stranded DNA, the ATP-dependent uptake of single-stranded DNA by duplex DNA, and the ATP-dependent hybridization of homologous single-stranded DNAs. It interacts with LexA causing its activation and leading to its autocatalytic cleavage. The chain is Protein RecA from Campylobacter fetus subsp. fetus (strain 82-40).